The following is a 180-amino-acid chain: Guanosine-3',5'-bis(diphosphate) 3'-pyrophosphohydrolase MESH1 (180 aa).

The HD domain maps to tyrosine 33–leucine 128. Residues histidine 36, histidine 62, and aspartate 63 each coordinate Mn(2+). Catalysis depends on nucleophile residues glutamate 66 and aspartate 67. Residue aspartate 123 coordinates Mn(2+).

This sequence belongs to the MESH1 family. Mn(2+) is required as a cofactor.

The catalysed reaction is guanosine 3',5'-bis(diphosphate) + H2O = GDP + diphosphate + H(+). Its function is as follows. ppGpp hydrolyzing enzyme involved in starvation response. The polypeptide is Guanosine-3',5'-bis(diphosphate) 3'-pyrophosphohydrolase MESH1 (hddc3) (Danio rerio (Zebrafish)).